Reading from the N-terminus, the 197-residue chain is Phosphoheptose isomerase (197 aa).

The 162-residue stretch at 36–197 folds into the SIS domain; that stretch reads MVNALLNEGK…IDSQLFGSEE (162 aa). 51–53 contributes to the substrate binding site; sequence NGG. Zn(2+) contacts are provided by His-60 and Glu-64. Substrate contacts are provided by residues Glu-64, 93-94, 119-121, Ser-124, and Gln-174; these read ND and STS. Residues Gln-174 and His-182 each coordinate Zn(2+).

It belongs to the SIS family. GmhA subfamily. As to quaternary structure, homotetramer. The cofactor is Zn(2+).

The protein resides in the cytoplasm. It catalyses the reaction 2 D-sedoheptulose 7-phosphate = D-glycero-alpha-D-manno-heptose 7-phosphate + D-glycero-beta-D-manno-heptose 7-phosphate. The protein operates within carbohydrate biosynthesis; D-glycero-D-manno-heptose 7-phosphate biosynthesis; D-glycero-alpha-D-manno-heptose 7-phosphate and D-glycero-beta-D-manno-heptose 7-phosphate from sedoheptulose 7-phosphate: step 1/1. Functionally, catalyzes the isomerization of sedoheptulose 7-phosphate in D-glycero-D-manno-heptose 7-phosphate. The polypeptide is Phosphoheptose isomerase (Pseudomonas fluorescens (strain Pf0-1)).